The chain runs to 113 residues: uncharacterized protein (113 aa).

It to M.jannaschii MJ0886 C-terminal region.

This is an uncharacterized protein from Clostridium pasteurianum.